The following is a 475-amino-acid chain: Beta-amyrin 28-monooxygenase (475 aa).

Residues 2 to 22 (YLTILFLFVSSILLSLMFLLR) form a helical membrane-spanning segment. A heme-binding site is contributed by C422.

Belongs to the cytochrome P450 family. Heme serves as cofactor.

It is found in the membrane. It catalyses the reaction beta-amyrin + 3 reduced [NADPH--hemoprotein reductase] + 3 O2 = oleanolate + 3 oxidized [NADPH--hemoprotein reductase] + 4 H2O + 4 H(+). Functionally, catalyzes the oxidation of the methyl group to a carboxyl group at the C-28 position of beta-amyrin to form oleanolate. The protein is Beta-amyrin 28-monooxygenase of Barbarea vulgaris (Yellow rocket).